A 181-amino-acid polypeptide reads, in one-letter code: TATA-box-binding protein (181 aa).

A run of 2 repeats spans residues 7 to 83 (VVNV…VKEL) and 98 to 173 (VQNM…SKTL).

The protein belongs to the TBP family.

General factor that plays a role in the activation of archaeal genes transcribed by RNA polymerase. Binds specifically to the TATA box promoter element which lies close to the position of transcription initiation. This chain is TATA-box-binding protein, found in Methanococcus maripaludis (strain DSM 14266 / JCM 13030 / NBRC 101832 / S2 / LL).